The sequence spans 696 residues: Elongation factor G (696 aa).

One can recognise a tr-type G domain in the interval 8-290 (ERYRNIGISA…KVIELMPAPT (283 aa)). GTP-binding positions include 17–24 (AHIDAGKT), 88–92 (DTPGH), and 142–145 (NKMD).

It belongs to the TRAFAC class translation factor GTPase superfamily. Classic translation factor GTPase family. EF-G/EF-2 subfamily.

It is found in the cytoplasm. In terms of biological role, catalyzes the GTP-dependent ribosomal translocation step during translation elongation. During this step, the ribosome changes from the pre-translocational (PRE) to the post-translocational (POST) state as the newly formed A-site-bound peptidyl-tRNA and P-site-bound deacylated tRNA move to the P and E sites, respectively. Catalyzes the coordinated movement of the two tRNA molecules, the mRNA and conformational changes in the ribosome. The chain is Elongation factor G from Thiobacillus denitrificans (strain ATCC 25259 / T1).